A 245-amino-acid polypeptide reads, in one-letter code: Tetrahydromethanopterin S-methyltransferase subunit A 1 (245 aa).

Residues 1 to 222 lie on the Cytoplasmic side of the membrane; that stretch reads MADKKPAADN…AGNYSGKVQG (222 aa). Histidine 84 contributes to the 5-hydroxybenzimidazolylcob(I)amide binding site. A helical membrane pass occupies residues 223 to 243; the sequence is IMIGLIFTLVIGFLLLMAPLL. At 244 to 245 the chain is on the extracellular side; it reads GA.

Belongs to the MtrA family. As to quaternary structure, the complex is composed of 8 subunits; MtrA, MtrB, MtrC, MtrD, MtrE, MtrF, MtrG and MtrH. 5-hydroxybenzimidazolylcob(I)amide serves as cofactor.

The protein resides in the cell membrane. The catalysed reaction is 5-methyl-5,6,7,8-tetrahydromethanopterin + coenzyme M + 2 Na(+)(in) = 5,6,7,8-tetrahydromethanopterin + methyl-coenzyme M + 2 Na(+)(out). The protein operates within one-carbon metabolism; methanogenesis from CO(2); methyl-coenzyme M from 5,10-methylene-5,6,7,8-tetrahydromethanopterin: step 2/2. In terms of biological role, part of a complex that catalyzes the formation of methyl-coenzyme M and tetrahydromethanopterin from coenzyme M and methyl-tetrahydromethanopterin. This is an energy-conserving, sodium-ion translocating step. In Methanobrevibacter ruminantium (strain ATCC 35063 / DSM 1093 / JCM 13430 / OCM 146 / M1) (Methanobacterium ruminantium), this protein is Tetrahydromethanopterin S-methyltransferase subunit A 1.